A 217-amino-acid chain; its full sequence is MIKLRMPAGGERYIDGKSVYKLYLMIKQHMNGKYDVIKYNWCMRVSDAAYQKRRDKYFFQKLSEKYKLKELALIFISNLVANQDAWIGDISDADALVFYREYIGRLKQIKFKFEEDIRNIYYFSKKVEVSAFKEIFEYNPKVQSSYIFKLLQSNIISFETFILLDSFLNIIDKHDEQTDNLVWNNYSIKLKAYRKILNIDSQKAKNVFIETVKSCKY.

It belongs to the Tequatrovirus DNA helicase assembly protein family. In terms of assembly, monomer. Homohexamer; when associated with DNA. Interacts (via C-terminus) with the DnaB-like replicative helicase (via C-terminus); this interaction brings about the rapid assembly of the helicase onto ssDNA. Interacts (via C-terminus) with the single-stranded DNA-binding protein; a ternary complex between the helicase assembly protein, the single-stranded DNA-binding protein and ssDNA is an obligatory intermediate in the helicase loading mechanism. Interacts with the viral DNA polymerase. Binds to single and double-stranded DNA. Part of the replicase complex that includes the DNA polymerase, the polymerase clamp, the clamp loader complex, the single-stranded DNA binding protein (SSB), the primase, the DnaB-like replicative helicase and the helicase assembly factor.

Functionally, DNA helicase loader protein that participates in viral DNA replication, recombination, and repair. At the fork, required for loading of the replicative helicase onto DNA protected by the ssDNA-binding protein. Coordinates simultaneous synthesis of leading- and lagging-strands. The polypeptide is DNA helicase assembly protein (Enterobacteria phage T4 (Bacteriophage T4)).